We begin with the raw amino-acid sequence, 478 residues long: NADH-quinone oxidoreductase subunit N (478 aa).

13 helical membrane-spanning segments follow: residues 8–28 (LVLP…FGVW), 38–58 (ILWA…LGTG), 62–82 (AFGG…VILV), 106–126 (PILI…GDLM), 160–180 (FVLG…VYGF), 200–220 (IGLL…VSAV), 234–254 (PTPV…ALIA), 268–288 (WGQI…IAGI), 300–320 (SSIS…AAGV), 322–342 (SMLL…AFIL), 368–388 (AFAL…LGFF), 398–418 (IGAG…IGAF), and 445–465 (FAFL…MAGV).

It belongs to the complex I subunit 2 family. As to quaternary structure, NDH-1 is composed of 14 different subunits. Subunits NuoA, H, J, K, L, M, N constitute the membrane sector of the complex.

It is found in the cellular chromatophore membrane. The enzyme catalyses a quinone + NADH + 5 H(+)(in) = a quinol + NAD(+) + 4 H(+)(out). Functionally, NDH-1 shuttles electrons from NADH, via FMN and iron-sulfur (Fe-S) centers, to quinones in the respiratory chain. The immediate electron acceptor for the enzyme in this species is believed to be ubiquinone. Couples the redox reaction to proton translocation (for every two electrons transferred, four hydrogen ions are translocated across the cytoplasmic membrane), and thus conserves the redox energy in a proton gradient. In Rhodobacter capsulatus (Rhodopseudomonas capsulata), this protein is NADH-quinone oxidoreductase subunit N.